We begin with the raw amino-acid sequence, 61 residues long: Large ribosomal subunit protein uL29 (61 aa).

This sequence belongs to the universal ribosomal protein uL29 family.

The chain is Large ribosomal subunit protein uL29 from Stenotrophomonas maltophilia (strain K279a).